The following is a 90-amino-acid chain: uncharacterized protein (90 aa).

A helical transmembrane segment spans residues His15 to Thr34. Residues Thr34–Asp65 are disordered. Residues Lys43–Asp60 show a composition bias toward polar residues. An N-linked (GlcNAc...) asparagine glycan is attached at Asn44.

The protein localises to the mitochondrion membrane. This is an uncharacterized protein from Saccharomyces cerevisiae (strain ATCC 204508 / S288c) (Baker's yeast).